Consider the following 81-residue polypeptide: Short neurotoxin 1 (81 aa).

The N-terminal stretch at 1-21 (MKTLLLTLVVVTIVCLDLGYT) is a signal peptide. Disulfide bonds link Cys24–Cys43, Cys38–Cys60, Cys62–Cys73, and Cys74–Cys79.

Belongs to the three-finger toxin family. Short-chain subfamily. Type I alpha-neurotoxin sub-subfamily. Expressed by the venom gland.

Its subcellular location is the secreted. Its function is as follows. Binds to muscle nicotinic acetylcholine receptor (nAChR) and inhibit acetylcholine from binding to the receptor, thereby impairing neuromuscular transmission. The chain is Short neurotoxin 1 from Austrelaps superbus (Lowland copperhead snake).